Reading from the N-terminus, the 103-residue chain is UPF0473 protein LVIS_1220 (103 aa).

Belongs to the UPF0473 family.

The polypeptide is UPF0473 protein LVIS_1220 (Levilactobacillus brevis (strain ATCC 367 / BCRC 12310 / CIP 105137 / JCM 1170 / LMG 11437 / NCIMB 947 / NCTC 947) (Lactobacillus brevis)).